The following is a 400-amino-acid chain: Enoyl-[acyl-carrier-protein] reductase [NADH] (400 aa).

NAD(+) contacts are provided by residues 48–53, 74–75, 111–112, and 139–140; these read GASTGY, FE, DA, and LA. Tyrosine 225 contributes to the substrate binding site. Tyrosine 235 (proton donor) is an active-site residue. NAD(+)-binding positions include lysine 244 and 273–275; that span reads VVT.

Belongs to the TER reductase family. Monomer.

It catalyses the reaction a 2,3-saturated acyl-[ACP] + NAD(+) = a (2E)-enoyl-[ACP] + NADH + H(+). Its pathway is lipid metabolism; fatty acid biosynthesis. Involved in the final reduction of the elongation cycle of fatty acid synthesis (FAS II). Catalyzes the reduction of a carbon-carbon double bond in an enoyl moiety that is covalently linked to an acyl carrier protein (ACP). In Burkholderia lata (strain ATCC 17760 / DSM 23089 / LMG 22485 / NCIMB 9086 / R18194 / 383), this protein is Enoyl-[acyl-carrier-protein] reductase [NADH].